A 95-amino-acid polypeptide reads, in one-letter code: Integration host factor subunit beta (95 aa).

It belongs to the bacterial histone-like protein family. In terms of assembly, heterodimer of an alpha and a beta chain.

This protein is one of the two subunits of integration host factor, a specific DNA-binding protein that functions in genetic recombination as well as in transcriptional and translational control. This is Integration host factor subunit beta from Shewanella pealeana (strain ATCC 700345 / ANG-SQ1).